The following is a 223-amino-acid chain: GTP cyclohydrolase 1 (223 aa).

Residues cysteine 111, histidine 114, and cysteine 182 each coordinate Zn(2+).

Belongs to the GTP cyclohydrolase I family. Homomer.

It carries out the reaction GTP + H2O = 7,8-dihydroneopterin 3'-triphosphate + formate + H(+). It participates in cofactor biosynthesis; 7,8-dihydroneopterin triphosphate biosynthesis; 7,8-dihydroneopterin triphosphate from GTP: step 1/1. This chain is GTP cyclohydrolase 1, found in Flavobacterium johnsoniae (strain ATCC 17061 / DSM 2064 / JCM 8514 / BCRC 14874 / CCUG 350202 / NBRC 14942 / NCIMB 11054 / UW101) (Cytophaga johnsonae).